Here is a 248-residue protein sequence, read N- to C-terminus: Non-specific acid phosphatase (248 aa).

A signal peptide spans 1–20; the sequence is MKKLLAVFCAGAFVSTSVFA.

Belongs to the class A bacterial acid phosphatase family.

Its subcellular location is the periplasm. The enzyme catalyses a phosphate monoester + H2O = an alcohol + phosphate. This is Non-specific acid phosphatase (phoN) from Providencia stuartii.